The chain runs to 341 residues: Phenylalanine--tRNA ligase alpha subunit (341 aa).

Position 256 (Glu-256) interacts with Mg(2+).

The protein belongs to the class-II aminoacyl-tRNA synthetase family. Phe-tRNA synthetase alpha subunit type 1 subfamily. As to quaternary structure, tetramer of two alpha and two beta subunits. It depends on Mg(2+) as a cofactor.

It is found in the cytoplasm. It carries out the reaction tRNA(Phe) + L-phenylalanine + ATP = L-phenylalanyl-tRNA(Phe) + AMP + diphosphate + H(+). The protein is Phenylalanine--tRNA ligase alpha subunit of Chlamydia felis (strain Fe/C-56) (Chlamydophila felis).